The primary structure comprises 286 residues: MNRFSVLMCLVILSIFHGVPTAEGDVTVKFSLLGSNHKSYSKFITSMRNALPNAGDIYNIPLLVPSISGSRRYILMQLSNYEGNTITMAVDVTNVYIMGYLVNGTSYFFNETDAQLASKFVFQGTKSITLPYSGNYQKLQSVARKERDSIPLGFMALDSAISTLYYYDSRSAPIAFLVLIQTTAEAARYKYIEKQIIDRISVSKVPDLAAISLENEWSLLSKQIQIAKSNNGQFQTPVKIINDKGILTEVTNVSSLVVTKNIMLLLNKLNIASFEDHVISTTMPQA.

A signal peptide spans 1 to 21 (MNRFSVLMCLVILSIFHGVPT). Residues asparagine 103 and asparagine 110 are each glycosylated (N-linked (GlcNAc...) asparagine). Residue glutamate 185 is part of the active site. The N-linked (GlcNAc...) asparagine glycan is linked to asparagine 252.

This sequence belongs to the ribosome-inactivating protein family. Type 1 RIP subfamily.

The enzyme catalyses Endohydrolysis of the N-glycosidic bond at one specific adenosine on the 28S rRNA.. The polypeptide is Putative ribosome-inactivating protein (Cucumis ficifolius (Cucumis figarei)).